The primary structure comprises 296 residues: Outer surface protein B (296 aa).

The first 15 residues, 1 to 15 (MRLLIGFALALALIG), serve as a signal peptide directing secretion. Cys16 carries N-palmitoyl cysteine lipidation. A lipid anchor (S-diacylglycerol cysteine) is attached at Cys16. A disordered region spans residues 25–51 (GSQKENDLNLEDSSKKSHQNAKQDLPA). Residues 28–39 (KENDLNLEDSSK) are compositionally biased toward basic and acidic residues.

It localises to the cell outer membrane. This chain is Outer surface protein B (ospB), found in Borreliella burgdorferi (strain ATCC 35210 / DSM 4680 / CIP 102532 / B31) (Borrelia burgdorferi).